The chain runs to 81 residues: Photosystem I iron-sulfur center (81 aa).

2 4Fe-4S ferredoxin-type domains span residues 2-31 (SHSVKIYDTCIGCTQCVRACPTDVLEMVPW) and 39-68 (IASAPRTEDCVGCKRCESACPTDFLSVRVY). The [4Fe-4S] cluster site is built by Cys11, Cys14, Cys17, Cys21, Cys48, Cys51, Cys54, and Cys58.

In terms of assembly, the eukaryotic PSI reaction center is composed of at least 11 subunits. Requires [4Fe-4S] cluster as cofactor.

The protein localises to the plastid. It is found in the chloroplast thylakoid membrane. It carries out the reaction reduced [plastocyanin] + hnu + oxidized [2Fe-2S]-[ferredoxin] = oxidized [plastocyanin] + reduced [2Fe-2S]-[ferredoxin]. Apoprotein for the two 4Fe-4S centers FA and FB of photosystem I (PSI); essential for photochemical activity. FB is the terminal electron acceptor of PSI, donating electrons to ferredoxin. The C-terminus interacts with PsaA/B/D and helps assemble the protein into the PSI complex. Required for binding of PsaD and PsaE to PSI. PSI is a plastocyanin/cytochrome c6-ferredoxin oxidoreductase, converting photonic excitation into a charge separation, which transfers an electron from the donor P700 chlorophyll pair to the spectroscopically characterized acceptors A0, A1, FX, FA and FB in turn. In Pleurastrum terricola (Filamentous green alga), this protein is Photosystem I iron-sulfur center.